A 1902-amino-acid polypeptide reads, in one-letter code: PII-type proteinase (1902 aa).

Positions 1–33 (MQRKKKGLSILLAGTVALGALAVLPVGEIQAKA) are cleaved as a signal peptide. Positions 34–187 (AISQQTKVSS…VTLAKVYYPT (154 aa)) are excised as a propeptide. Residues 191 to 697 (ANSMANVQAV…AGLVDVKAAI (507 aa)) form the Peptidase S8 domain. Catalysis depends on charge relay system residues Asp217, His281, and Ser620. The span at 1793 to 1805 (KTAGKGDDTTGTS) shows a compositional bias: low complexity. The interval 1793 to 1872 (KTAGKGDDTT…GKGALPKTAE (80 aa)) is disordered. An LPXTG sorting signal motif is present at residues 1867–1871 (LPKTA). Pentaglycyl murein peptidoglycan amidated threonine is present on Thr1870. Positions 1871 to 1902 (AETTERPAFGFLGVIVVSLMGVLGLKRKQREE) are cleaved as a propeptide — removed by sortase.

The protein belongs to the peptidase S8 family.

It is found in the secreted. The protein localises to the cell wall. It carries out the reaction Endopeptidase activity with very broad specificity, although some subsite preference have been noted, e.g. large hydrophobic residues in the P1 and P4 positions, and Pro in the P2 position. Best known for its action on caseins, although it has been shown to hydrolyze hemoglobin and oxidized insulin B-chain.. Protease which breaks down milk proteins during the growth of the bacteria on milk. The chain is PII-type proteinase (prtP) from Lacticaseibacillus paracasei (Lactobacillus paracasei).